A 278-amino-acid chain; its full sequence is Glutamate racemase (278 aa).

Substrate is bound by residues 25 to 26 (DS) and 57 to 58 (YG). C89 (proton donor/acceptor) is an active-site residue. 90-91 (NT) contacts substrate. Catalysis depends on C204, which acts as the Proton donor/acceptor. 205-206 (TH) lines the substrate pocket.

It belongs to the aspartate/glutamate racemases family.

The enzyme catalyses L-glutamate = D-glutamate. It participates in cell wall biogenesis; peptidoglycan biosynthesis. Functionally, provides the (R)-glutamate required for cell wall biosynthesis. The polypeptide is Glutamate racemase (Brucella anthropi (strain ATCC 49188 / DSM 6882 / CCUG 24695 / JCM 21032 / LMG 3331 / NBRC 15819 / NCTC 12168 / Alc 37) (Ochrobactrum anthropi)).